Here is a 227-residue protein sequence, read N- to C-terminus: Cytochrome c oxidase subunit 2 (227 aa).

Topologically, residues 1-14 (MAYPLQLGLQDASS) are mitochondrial intermembrane. A helical transmembrane segment spans residues 15-45 (PIMEELMNFHDHTLMIVFLISSLVLYLISLM). Residues 46–59 (LTTKLIHTSTMDAQ) are Mitochondrial matrix-facing. Residues 60–87 (EVETVWTILPAIILILIALPSLRILYMM) form a helical membrane-spanning segment. The Mitochondrial intermembrane portion of the chain corresponds to 88 to 227 (DEINNPVLTV…LFENWSLSLT (140 aa)). Cu cation is bound by residues His161, Cys196, Glu198, Cys200, His204, and Met207. Position 198 (Glu198) interacts with Mg(2+).

Belongs to the cytochrome c oxidase subunit 2 family. As to quaternary structure, component of the cytochrome c oxidase (complex IV, CIV), a multisubunit enzyme composed of 14 subunits. The complex is composed of a catalytic core of 3 subunits MT-CO1, MT-CO2 and MT-CO3, encoded in the mitochondrial DNA, and 11 supernumerary subunits COX4I, COX5A, COX5B, COX6A, COX6B, COX6C, COX7A, COX7B, COX7C, COX8 and NDUFA4, which are encoded in the nuclear genome. The complex exists as a monomer or a dimer and forms supercomplexes (SCs) in the inner mitochondrial membrane with NADH-ubiquinone oxidoreductase (complex I, CI) and ubiquinol-cytochrome c oxidoreductase (cytochrome b-c1 complex, complex III, CIII), resulting in different assemblies (supercomplex SCI(1)III(2)IV(1) and megacomplex MCI(2)III(2)IV(2)). Found in a complex with TMEM177, COA6, COX18, COX20, SCO1 and SCO2. Interacts with TMEM177 in a COX20-dependent manner. Interacts with COX20. Interacts with COX16. The cofactor is Cu cation.

The protein resides in the mitochondrion inner membrane. The catalysed reaction is 4 Fe(II)-[cytochrome c] + O2 + 8 H(+)(in) = 4 Fe(III)-[cytochrome c] + 2 H2O + 4 H(+)(out). Its function is as follows. Component of the cytochrome c oxidase, the last enzyme in the mitochondrial electron transport chain which drives oxidative phosphorylation. The respiratory chain contains 3 multisubunit complexes succinate dehydrogenase (complex II, CII), ubiquinol-cytochrome c oxidoreductase (cytochrome b-c1 complex, complex III, CIII) and cytochrome c oxidase (complex IV, CIV), that cooperate to transfer electrons derived from NADH and succinate to molecular oxygen, creating an electrochemical gradient over the inner membrane that drives transmembrane transport and the ATP synthase. Cytochrome c oxidase is the component of the respiratory chain that catalyzes the reduction of oxygen to water. Electrons originating from reduced cytochrome c in the intermembrane space (IMS) are transferred via the dinuclear copper A center (CU(A)) of subunit 2 and heme A of subunit 1 to the active site in subunit 1, a binuclear center (BNC) formed by heme A3 and copper B (CU(B)). The BNC reduces molecular oxygen to 2 water molecules using 4 electrons from cytochrome c in the IMS and 4 protons from the mitochondrial matrix. This is Cytochrome c oxidase subunit 2 (MT-CO2) from Taterillus emini (Emin's gerbil).